A 213-amino-acid polypeptide reads, in one-letter code: NADH dehydrogenase [ubiquinone] iron-sulfur protein 7, mitochondrial (213 aa).

A mitochondrion-targeting transit peptide spans Met-1 to Leu-31. Over residues Ser-30–Ser-42 the composition is skewed to low complexity. Positions Ser-30–Thr-52 are disordered. Cys-88, Cys-89, Cys-153, and Cys-183 together coordinate [4Fe-4S] cluster.

This sequence belongs to the complex I 20 kDa subunit family. As to quaternary structure, complex I is composed of about 45 different subunits. This is a component of the iron-sulfur (IP) fragment of the enzyme. [4Fe-4S] cluster is required as a cofactor.

The protein resides in the mitochondrion. The enzyme catalyses a ubiquinone + NADH + 5 H(+)(in) = a ubiquinol + NAD(+) + 4 H(+)(out). In terms of biological role, core subunit of the mitochondrial membrane respiratory chain NADH dehydrogenase (Complex I) that is believed to belong to the minimal assembly required for catalysis. Complex I functions in the transfer of electrons from NADH to the respiratory chain. The immediate electron acceptor for the enzyme is believed to be ubiquinone. This chain is NADH dehydrogenase [ubiquinone] iron-sulfur protein 7, mitochondrial, found in Solanum tuberosum (Potato).